The sequence spans 108 residues: Large ribosomal subunit protein uL11 (108 aa).

The protein belongs to the universal ribosomal protein uL11 family. As to quaternary structure, part of the ribosomal stalk of the 50S ribosomal subunit. Interacts with L10 and the large rRNA to form the base of the stalk. L10 forms an elongated spine to which L12 dimers bind in a sequential fashion forming a multimeric L10(L12)X complex.

Its function is as follows. Forms part of the ribosomal stalk which helps the ribosome interact with GTP-bound translation factors. This Aeropyrum pernix (strain ATCC 700893 / DSM 11879 / JCM 9820 / NBRC 100138 / K1) protein is Large ribosomal subunit protein uL11 (rpl11).